The chain runs to 344 residues: Protein RecA (344 aa).

66 to 73 (GPESSGKT) serves as a coordination point for ATP.

It belongs to the RecA family.

It localises to the cytoplasm. In terms of biological role, can catalyze the hydrolysis of ATP in the presence of single-stranded DNA, the ATP-dependent uptake of single-stranded DNA by duplex DNA, and the ATP-dependent hybridization of homologous single-stranded DNAs. It interacts with LexA causing its activation and leading to its autocatalytic cleavage. The polypeptide is Protein RecA (Azoarcus sp. (strain BH72)).